Reading from the N-terminus, the 165-residue chain is Neurotrophin-3 (165 aa).

The first 3 residues, isoleucine 1 to serine 3, serve as a signal peptide directing secretion. The propeptide occupies threonine 4–arginine 119. The disordered stretch occupies residues lysine 32–lysine 61. The N-linked (GlcNAc...) asparagine glycan is linked to asparagine 112.

Belongs to the NGF-beta family.

The protein localises to the secreted. Seems to promote the survival of visceral and proprioceptive sensory neurons. This is Neurotrophin-3 (NTF3) from Xenopeltis unicolor (Sunbeam snake).